The sequence spans 487 residues: Serine/threonine-protein kinase 4 (487 aa).

Methionine 1 carries the N-acetylmethionine modification. The residue at position 3 (threonine 3) is a Phosphothreonine. A Protein kinase domain is found at 30 to 281; that stretch reads FDVLEKLGEG…ATQLLQHPFV (252 aa). Residues 36–44 and lysine 59 contribute to the ATP site; that span reads LGEGSYGSV. Aspartate 149 (proton acceptor) is an active-site residue. A Phosphothreonine; by autocatalysis modification is found at threonine 183. Serine 265 is subject to Phosphoserine. Positions 290-310 form a coiled coil; the sequence is LRDLINEAMDVKLKRQESQQR. A compositionally biased stretch (basic and acidic residues) spans 303 to 312; it reads KRQESQQREV. The interval 303–332 is disordered; it reads KRQESQQREVDQDDEENSEEDEMDSGTMVR. The span at 313-326 shows a compositional bias: acidic residues; it reads DQDDEENSEEDEMD. Serine 320 carries the post-translational modification Phosphoserine. 2 positions are modified to phosphothreonine: threonine 340 and threonine 367. Phosphothreonine; by PKB/AKT1 is present on threonine 387. A phosphoserine mark is found at serine 410 and serine 414. Position 433 is a phosphotyrosine (tyrosine 433). Residues 433–480 enclose the SARAH domain; sequence YEFLKSWTVEDLQKRLLALDPMMEQEIEEIRQKYQSKRQPILDAIEAK.

It belongs to the protein kinase superfamily. STE Ser/Thr protein kinase family. STE20 subfamily. As to quaternary structure, homodimer; mediated via the coiled-coil region. Interacts with NORE1, which inhibits autoactivation. Interacts with and stabilizes SAV1. Interacts with RASSF1. Interacts with FOXO3. Interacts with RASSF2 (via SARAH domain). Interacts with AR, PKB/AKT1, TNNI3 and SIRT1. Interacts with DLG5 (via PDZ domain 3). Interacts with MARK3 and SCRIB in the presence of DLG5. Requires Mg(2+) as cofactor. Post-translationally, autophosphorylated on serine and threonine residues. Phosphorylation at Thr-387 by PKB/AKT1, leads to inhibition of its: kinase activity, nuclear translocation and autophosphorylation at Thr-183. It also diminishes its cleavage by caspases and its ability to phosphorylate FOXO3. In terms of processing, proteolytically cleaved by caspase-3 during apoptosis at Asp-326 and Asp-349 resulting in a 37 kDa or a 39 kDa subunit respectively. The 39 kDa subunit is further cleaved into the 37 kDa form. Proteolytic cleavage results in kinase activation and nuclear translocation of the truncated form (MST1/N). It is less likely that cleavage at Asp-349 is a prerequisite for activation as this site is not conserved in the murine ortholog.

It localises to the cytoplasm. The protein localises to the nucleus. The enzyme catalyses L-seryl-[protein] + ATP = O-phospho-L-seryl-[protein] + ADP + H(+). It catalyses the reaction L-threonyl-[protein] + ATP = O-phospho-L-threonyl-[protein] + ADP + H(+). Its activity is regulated as follows. Inhibited by the C-terminal non-catalytic region. Activated by caspase-cleavage. Full activation also requires homodimerization and autophosphorylation of Thr-183. Activated by RASSF1 which acts by preventing its dephosphorylation. In terms of biological role, stress-activated, pro-apoptotic kinase which, following caspase-cleavage, enters the nucleus and induces chromatin condensation followed by internucleosomal DNA fragmentation. Key component of the Hippo signaling pathway which plays a pivotal role in organ size control and tumor suppression by restricting proliferation and promoting apoptosis. The core of this pathway is composed of a kinase cascade wherein STK3/MST2 and STK4/MST1, in complex with its regulatory protein SAV1, phosphorylates and activates LATS1/2 in complex with its regulatory protein MOB1, which in turn phosphorylates and inactivates YAP1 oncoprotein and WWTR1/TAZ. Phosphorylation of YAP1 by LATS2 inhibits its translocation into the nucleus to regulate cellular genes important for cell proliferation, cell death, and cell migration. STK3/MST2 and STK4/MST1 are required to repress proliferation of mature hepatocytes, to prevent activation of facultative adult liver stem cells (oval cells), and to inhibit tumor formation. Phosphorylates 'Ser-14' of histone H2B (H2BS14ph) during apoptosis. Phosphorylates FOXO3 upon oxidative stress, which results in its nuclear translocation and cell death initiation. Phosphorylates MOBKL1A, MOBKL1B and RASSF2. Phosphorylates TNNI3 (cardiac Tn-I) and alters its binding affinity to TNNC1 (cardiac Tn-C) and TNNT2 (cardiac Tn-T). Phosphorylates FOXO1 on 'Ser-212' and regulates its activation and stimulates transcription of PMAIP1 in a FOXO1-dependent manner. Phosphorylates SIRT1 and inhibits SIRT1-mediated p53/TP53 deacetylation, thereby promoting p53/TP53 dependent transcription and apoptosis upon DNA damage. Acts as an inhibitor of PKB/AKT1. Phosphorylates AR on 'Ser-650' and suppresses its activity by intersecting with PKB/AKT1 signaling and antagonizing formation of AR-chromatin complexes. The chain is Serine/threonine-protein kinase 4 (STK4) from Chlorocebus aethiops (Green monkey).